The sequence spans 97 residues: Small ribosomal subunit protein bS6 (97 aa).

Belongs to the bacterial ribosomal protein bS6 family.

Binds together with bS18 to 16S ribosomal RNA. This chain is Small ribosomal subunit protein bS6, found in Dictyoglomus turgidum (strain DSM 6724 / Z-1310).